Here is a 326-residue protein sequence, read N- to C-terminus: Tagatose 1,6-diphosphate aldolase (326 aa).

It belongs to the aldolase LacD family.

The enzyme catalyses D-tagatofuranose 1,6-bisphosphate = D-glyceraldehyde 3-phosphate + dihydroxyacetone phosphate. It functions in the pathway carbohydrate metabolism; D-tagatose 6-phosphate degradation; D-glyceraldehyde 3-phosphate and glycerone phosphate from D-tagatose 6-phosphate: step 2/2. The chain is Tagatose 1,6-diphosphate aldolase from Streptococcus pneumoniae (strain ATCC BAA-255 / R6).